Here is a 470-residue protein sequence, read N- to C-terminus: Cysteine--tRNA ligase 1 (470 aa).

Residue Cys-29 participates in Zn(2+) binding. Residues 31-41 (PTVYDDAHIGN) carry the 'HIGH' region motif. 3 residues coordinate Zn(2+): Cys-221, His-246, and Glu-250. The short motif at 279–283 (KMSKS) is the 'KMSKS' region element. Lys-282 is an ATP binding site.

It belongs to the class-I aminoacyl-tRNA synthetase family. As to quaternary structure, monomer. Zn(2+) is required as a cofactor.

Its subcellular location is the cytoplasm. It carries out the reaction tRNA(Cys) + L-cysteine + ATP = L-cysteinyl-tRNA(Cys) + AMP + diphosphate. The sequence is that of Cysteine--tRNA ligase 1 from Burkholderia lata (strain ATCC 17760 / DSM 23089 / LMG 22485 / NCIMB 9086 / R18194 / 383).